A 2093-amino-acid polypeptide reads, in one-letter code: Nuclear-pore anchor (2093 aa).

Coiled-coil stretches lie at residues 57-362, 439-529, 570-627, and 688-1172; these read LEQK…TDEL, MILQ…RDVQ, DING…RAEE, and QEKA…LEAK. The segment at 1175–1198 is disordered; that stretch reads NSAEKNSRSGTISSGSTDSDHLED. Residues 1182 to 1191 show a composition bias toward low complexity; the sequence is RSGTISSGST. 2 coiled-coil regions span residues 1208–1252 and 1293–1585; these read LRRT…AERA and EKCQ…LKHA. 3 disordered regions span residues 1453-1489, 1525-1555, and 1627-2093; these read YEKE…AVVE, KKDE…KKEK, and SNSQ…PSPP. Positions 1470–1483 are enriched in basic and acidic residues; it reads QLEEAKEEAGKRTT. Over residues 1652 to 1674 the composition is skewed to polar residues; it reads STMTRVPSSTPLIKSPVATTQQL. Composition is skewed to basic and acidic residues over residues 1710–1719 and 1729–1740; these read KPEESPKVDV and DEGKQPAAHEPE. The span at 1764 to 1779 shows a compositional bias: polar residues; that stretch reads SEPQQDSLTQGETSSE. Basic and acidic residues predominate over residues 1789–1808; sequence KGSESHPDTSEGENLAKEPA. A coiled-coil region spans residues 1818 to 1849; that stretch reads TTDGDNEETEAENAEEKTEEYVEAQQDNEADE. Composition is skewed to acidic residues over residues 1821–1830 and 1838–1903; these read GDNEETEAEN and YVEA…EEGT. Residues 1921 to 1931 are compositionally biased toward polar residues; the sequence is TLATPTQSPSR. Residues 1935-1963 show a composition bias toward acidic residues; the sequence is AMEEAETTIETPVEDDKTDEGGDAAEEAA. The span at 1984–2009 shows a compositional bias: low complexity; that stretch reads TSAATTSPVSTAPTTSSTLASAITSS. Residue Ser2022 is modified to Phosphoserine.

Part of the nuclear pore complex (NPC). The NPC has an eight-fold symmetrical structure comprising a central transport channel and two rings, the cytoplasmic and nuclear rings, to which eight filaments are attached. The cytoplasmic filaments have loose ends, while the nuclear filaments are joined in a distal ring, forming a nuclear basket. NPCs are highly dynamic in configuration and composition, and can be devided in 3 subcomplexes, the NUP62 subcomplex, the NUP107-160 subcomplex and the NUP93 subcomplex, containing approximately 30 different nucleoporin proteins. Interacts with MAD1 and (via N-terminus) with ESD4. Ubiquitous. Highest expression in the shoot apical region.

It is found in the nucleus envelope. The protein resides in the nucleus membrane. The protein localises to the nucleus. Its subcellular location is the nuclear pore complex. Component of the nuclear pore complex. Acts as a docking site for activities required for desumoylation and mRNA export. Required for the proper expression or localization of a subset of miRNAs. Plays a role in meristematic cell division by interacting with spindle assembly checkpoint proteins. The protein is Nuclear-pore anchor of Arabidopsis thaliana (Mouse-ear cress).